The following is a 277-amino-acid chain: Thymidylate synthase (277 aa).

Arginine 21 lines the dUMP pocket. Residue histidine 51 participates in (6R)-5,10-methylene-5,6,7,8-tetrahydrofolate binding. 126–127 contacts dUMP; the sequence is RR. Catalysis depends on cysteine 159, which acts as the Nucleophile. DUMP-binding positions include 179 to 182, asparagine 190, and 220 to 222; these read RSAD and HLY. Aspartate 182 contributes to the (6R)-5,10-methylene-5,6,7,8-tetrahydrofolate binding site. Serine 276 is a (6R)-5,10-methylene-5,6,7,8-tetrahydrofolate binding site.

Belongs to the thymidylate synthase family. Bacterial-type ThyA subfamily. In terms of assembly, homodimer.

It localises to the cytoplasm. It catalyses the reaction dUMP + (6R)-5,10-methylene-5,6,7,8-tetrahydrofolate = 7,8-dihydrofolate + dTMP. It participates in pyrimidine metabolism; dTTP biosynthesis. Catalyzes the reductive methylation of 2'-deoxyuridine-5'-monophosphate (dUMP) to 2'-deoxythymidine-5'-monophosphate (dTMP) while utilizing 5,10-methylenetetrahydrofolate (mTHF) as the methyl donor and reductant in the reaction, yielding dihydrofolate (DHF) as a by-product. This enzymatic reaction provides an intracellular de novo source of dTMP, an essential precursor for DNA biosynthesis. The chain is Thymidylate synthase from Hydrogenovibrio crunogenus (strain DSM 25203 / XCL-2) (Thiomicrospira crunogena).